The primary structure comprises 352 residues: Mitochondrial ubiquitin ligase activator of NFKB 1 (352 aa).

Residues 1 to 8 (MENGGRPS) lie on the Cytoplasmic side of the membrane. A helical membrane pass occupies residues 9-29 (LCQFILLGTTSVVTAALYSVY). At 30–238 (RQKAWVSQEL…LLQRQESSVR (209 aa)) the chain is on the mitochondrial intermembrane side. K52 is covalently cross-linked (Glycyl lysine isopeptide (Lys-Gly) (interchain with G-Cter in ubiquitin)). Residues 239–259 (LWKVLALVFGFATCATLFFIL) form a helical membrane-spanning segment. Residues 260–352 (RKQYLQRQER…ITRVIPLYNS (93 aa)) are Cytoplasmic-facing. Residues K273 and K299 each participate in a glycyl lysine isopeptide (Lys-Gly) (interchain with G-Cter in ubiquitin) cross-link. The segment at 302–340 (CVVCLSSFKSCVFLECGHVCSCTECYRALPEPKKCPICR) adopts an RING-type zinc-finger fold.

In terms of assembly, homooligomer. Interacts with MAP3K7/TAK1. Interacts with UBC9. Interacts with and sumoylates DNM1L. Interacts with MAVS. Interacts with TP53 (via N-terminus); the interaction leads to ubiquitination and proteasomal degradation of TP53. Post-translationally, ubiquitinated by PRKN during mitophagy, leading to its degradation and enhancement of mitophagy. Deubiquitinated by USP30.

The protein resides in the mitochondrion outer membrane. It is found in the peroxisome. It catalyses the reaction S-ubiquitinyl-[E2 ubiquitin-conjugating enzyme]-L-cysteine + [acceptor protein]-L-lysine = [E2 ubiquitin-conjugating enzyme]-L-cysteine + N(6)-ubiquitinyl-[acceptor protein]-L-lysine.. It functions in the pathway protein modification; protein ubiquitination. It participates in protein modification; protein sumoylation. In terms of biological role, exhibits weak E3 ubiquitin-protein ligase activity. E3 ubiquitin ligases accept ubiquitin from an E2 ubiquitin-conjugating enzyme in the form of a thioester and then directly transfer the ubiquitin to targeted substrates. Can ubiquitinate AKT1 preferentially at 'Lys-284' involving 'Lys-48'-linked polyubiquitination and seems to be involved in regulation of Akt signaling by targeting phosphorylated Akt to proteasomal degradation. Mediates polyubiquitination of cytoplasmic TP53 at 'Lys-24' which targets TP53 for proteasomal degradation, thus reducing TP53 levels in the cytoplasm and mitochondrion. Proposed to preferentially act as a SUMO E3 ligase at physiological concentrations. Plays a role in the control of mitochondrial morphology by promoting mitochondrial fragmentation, and influences mitochondrial localization. Likely to promote mitochondrial fission through negatively regulating the mitochondrial fusion proteins MFN1 and MFN2, acting in a pathway that is parallel to the PRKN/PINK1 regulatory pathway. May also be involved in the sumoylation of the membrane fission protein DNM1L. Inhibits cell growth. When overexpressed, activates JNK through MAP3K7/TAK1 and induces caspase-dependent apoptosis. Involved in the modulation of innate immune defense against viruses by inhibiting RIGI-dependent antiviral response. Can mediate RIGI sumoylation and disrupt its polyubiquitination. The chain is Mitochondrial ubiquitin ligase activator of NFKB 1 (MUL1) from Macaca fascicularis (Crab-eating macaque).